The sequence spans 648 residues: 1-deoxy-D-xylulose-5-phosphate synthase (648 aa).

Thiamine diphosphate contacts are provided by residues histidine 73 and 114-116 (SHA). Aspartate 145 contacts Mg(2+). Residues 146 to 147 (GA), asparagine 175, tyrosine 286, and glutamate 367 each bind thiamine diphosphate. Position 175 (asparagine 175) interacts with Mg(2+).

The protein belongs to the transketolase family. DXPS subfamily. As to quaternary structure, homodimer. It depends on Mg(2+) as a cofactor. The cofactor is thiamine diphosphate.

The enzyme catalyses D-glyceraldehyde 3-phosphate + pyruvate + H(+) = 1-deoxy-D-xylulose 5-phosphate + CO2. It participates in metabolic intermediate biosynthesis; 1-deoxy-D-xylulose 5-phosphate biosynthesis; 1-deoxy-D-xylulose 5-phosphate from D-glyceraldehyde 3-phosphate and pyruvate: step 1/1. Catalyzes the acyloin condensation reaction between C atoms 2 and 3 of pyruvate and glyceraldehyde 3-phosphate to yield 1-deoxy-D-xylulose-5-phosphate (DXP). This Rhodococcus erythropolis (strain PR4 / NBRC 100887) protein is 1-deoxy-D-xylulose-5-phosphate synthase.